The sequence spans 189 residues: Recombination protein RecR (189 aa).

A C4-type zinc finger spans residues 48-63; the sequence is CQTCFHLSAEPLCDIC. In terms of domain architecture, Toprim spans 71–165; sequence QLLCVVADSR…QVSRIAYGLP (95 aa).

It belongs to the RecR family.

In terms of biological role, may play a role in DNA repair. It seems to be involved in an RecBC-independent recombinational process of DNA repair. It may act with RecF and RecO. This Prochlorococcus marinus (strain MIT 9303) protein is Recombination protein RecR.